The sequence spans 396 residues: S-adenosylmethionine synthase (396 aa).

His16 is an ATP binding site. Asp18 serves as a coordination point for Mg(2+). Glu44 provides a ligand contact to K(+). 2 residues coordinate L-methionine: Glu57 and Gln100. The interval 100–110 (QSVDINQGVDR) is flexible loop. ATP is bound by residues 165-167 (DAK), 231-232 (KF), Asp240, 246-247 (RK), Ala263, and Lys267. Asp240 lines the L-methionine pocket. Lys271 is a binding site for L-methionine.

Belongs to the AdoMet synthase family. Homotetramer; dimer of dimers. Requires Mg(2+) as cofactor. K(+) is required as a cofactor.

The protein resides in the cytoplasm. It catalyses the reaction L-methionine + ATP + H2O = S-adenosyl-L-methionine + phosphate + diphosphate. Its pathway is amino-acid biosynthesis; S-adenosyl-L-methionine biosynthesis; S-adenosyl-L-methionine from L-methionine: step 1/1. In terms of biological role, catalyzes the formation of S-adenosylmethionine (AdoMet) from methionine and ATP. The overall synthetic reaction is composed of two sequential steps, AdoMet formation and the subsequent tripolyphosphate hydrolysis which occurs prior to release of AdoMet from the enzyme. The protein is S-adenosylmethionine synthase of Azotobacter vinelandii (strain DJ / ATCC BAA-1303).